The primary structure comprises 142 residues: Large ribosomal subunit protein uL13 (142 aa).

Belongs to the universal ribosomal protein uL13 family. Part of the 50S ribosomal subunit.

Functionally, this protein is one of the early assembly proteins of the 50S ribosomal subunit, although it is not seen to bind rRNA by itself. It is important during the early stages of 50S assembly. This chain is Large ribosomal subunit protein uL13, found in Treponema denticola (strain ATCC 35405 / DSM 14222 / CIP 103919 / JCM 8153 / KCTC 15104).